A 141-amino-acid chain; its full sequence is Cystatin-SA (141 aa).

Residues 1-20 (MAWPLCTLLLLLATQAVALA) form the signal peptide. A Secondary area of contact motif is present at residues 76-80 (QIVGG). 2 cysteine pairs are disulfide-bonded: Cys94–Cys104 and Cys118–Cys138.

As to expression, expressed in submandibular and sublingual saliva but not in parotid saliva (at protein level). Expressed in submandibular gland and parotid gland.

It is found in the secreted. Its function is as follows. Thiol protease inhibitor. The polypeptide is Cystatin-SA (CST2) (Homo sapiens (Human)).